The chain runs to 238 residues: Pyridoxine 5'-phosphate synthase (238 aa).

Positions 7 and 18 each coordinate 3-amino-2-oxopropyl phosphate. Histidine 43 functions as the Proton acceptor in the catalytic mechanism. Residues arginine 45 and histidine 50 each coordinate 1-deoxy-D-xylulose 5-phosphate. Glutamate 70 (proton acceptor) is an active-site residue. A 1-deoxy-D-xylulose 5-phosphate-binding site is contributed by threonine 100. The Proton donor role is filled by histidine 190. Residues aspartate 191 and 213 to 214 each bind 3-amino-2-oxopropyl phosphate; that span reads GH.

Belongs to the PNP synthase family. As to quaternary structure, homooctamer; tetramer of dimers.

The protein resides in the cytoplasm. The enzyme catalyses 3-amino-2-oxopropyl phosphate + 1-deoxy-D-xylulose 5-phosphate = pyridoxine 5'-phosphate + phosphate + 2 H2O + H(+). It participates in cofactor biosynthesis; pyridoxine 5'-phosphate biosynthesis; pyridoxine 5'-phosphate from D-erythrose 4-phosphate: step 5/5. Catalyzes the complicated ring closure reaction between the two acyclic compounds 1-deoxy-D-xylulose-5-phosphate (DXP) and 3-amino-2-oxopropyl phosphate (1-amino-acetone-3-phosphate or AAP) to form pyridoxine 5'-phosphate (PNP) and inorganic phosphate. This is Pyridoxine 5'-phosphate synthase from Cytophaga hutchinsonii (strain ATCC 33406 / DSM 1761 / CIP 103989 / NBRC 15051 / NCIMB 9469 / D465).